Here is a 451-residue protein sequence, read N- to C-terminus: Phosphoglucosamine mutase (451 aa).

Catalysis depends on Ser-101, which acts as the Phosphoserine intermediate. Residues Ser-101, Asp-240, Asp-242, and Asp-244 each contribute to the Mg(2+) site. A Phosphoserine modification is found at Ser-101.

The protein belongs to the phosphohexose mutase family. Requires Mg(2+) as cofactor. Post-translationally, activated by phosphorylation.

The catalysed reaction is alpha-D-glucosamine 1-phosphate = D-glucosamine 6-phosphate. Its function is as follows. Catalyzes the conversion of glucosamine-6-phosphate to glucosamine-1-phosphate. The polypeptide is Phosphoglucosamine mutase (Streptococcus pyogenes serotype M1).